The chain runs to 688 residues: Homoaconitase, mitochondrial (688 aa).

[4Fe-4S] cluster contacts are provided by Cys335, Cys395, and Cys398. Residues 468–494 (SIDLPKSSGNTGATSEEPISEDDTSEA) form a disordered region.

Belongs to the aconitase/IPM isomerase family. [4Fe-4S] cluster is required as a cofactor.

It localises to the mitochondrion. The enzyme catalyses (2R,3S)-homoisocitrate = cis-homoaconitate + H2O. It functions in the pathway amino-acid biosynthesis; L-lysine biosynthesis via AAA pathway; L-alpha-aminoadipate from 2-oxoglutarate: step 3/5. Catalyzes the reversible hydration of cis-homoaconitate to (2R,3S)-homoisocitrate, a step in the alpha-aminoadipate pathway for lysine biosynthesis. In Candida parapsilosis (Yeast), this protein is Homoaconitase, mitochondrial (LYS4).